The following is a 456-amino-acid chain: Major facilitator superfamily domain-containing protein 10 (456 aa).

The next 3 helical transmembrane spans lie at 25-45 (VIIV…LLLP), 87-107 (VLFG…SAPL), and 114-136 (YLGR…AVWA). N-linked (GlcNAc...) asparagine glycosylation is present at Asn159. 8 helical membrane-spanning segments follow: residues 179–199 (AVIG…GAFL), 203–223 (MVPW…FCFL), 278–298 (LVYF…SFLA), 311–328 (KMFF…GTYA), 345–365 (LLLV…TLGL), 366–386 (GLML…TMVS), 403–423 (SLGA…YWLT), and 424–444 (GAQV…LLLW).

Belongs to the major facilitator superfamily. Esxpressed in luminal membrane of renal tubules. Expressed at the surface of eosinophils (at protein level).

The protein localises to the nucleus inner membrane. The protein resides in the cell membrane. Probable organic anion transporter which may serve as a transporter for some non-steroidal anti-inflammatory drugs (NSAIDs) as well as other organic anions across the luminal membranes of renal proximal tubules at the final excretion step into the urine. This chain is Major facilitator superfamily domain-containing protein 10 (Mfsd10), found in Mus musculus (Mouse).